The primary structure comprises 105 residues: Small ribosomal subunit protein uS10 (105 aa).

This sequence belongs to the universal ribosomal protein uS10 family. In terms of assembly, part of the 30S ribosomal subunit.

Its function is as follows. Involved in the binding of tRNA to the ribosomes. In Picosynechococcus sp. (strain ATCC 27264 / PCC 7002 / PR-6) (Agmenellum quadruplicatum), this protein is Small ribosomal subunit protein uS10.